We begin with the raw amino-acid sequence, 95 residues long: Aspartyl/glutamyl-tRNA(Asn/Gln) amidotransferase subunit C (95 aa).

It belongs to the GatC family. In terms of assembly, heterotrimer of A, B and C subunits.

The catalysed reaction is L-glutamyl-tRNA(Gln) + L-glutamine + ATP + H2O = L-glutaminyl-tRNA(Gln) + L-glutamate + ADP + phosphate + H(+). The enzyme catalyses L-aspartyl-tRNA(Asn) + L-glutamine + ATP + H2O = L-asparaginyl-tRNA(Asn) + L-glutamate + ADP + phosphate + 2 H(+). Functionally, allows the formation of correctly charged Asn-tRNA(Asn) or Gln-tRNA(Gln) through the transamidation of misacylated Asp-tRNA(Asn) or Glu-tRNA(Gln) in organisms which lack either or both of asparaginyl-tRNA or glutaminyl-tRNA synthetases. The reaction takes place in the presence of glutamine and ATP through an activated phospho-Asp-tRNA(Asn) or phospho-Glu-tRNA(Gln). In Caulobacter sp. (strain K31), this protein is Aspartyl/glutamyl-tRNA(Asn/Gln) amidotransferase subunit C.